Here is a 296-residue protein sequence, read N- to C-terminus: Ribosomal RNA small subunit methyltransferase A (296 aa).

Positions 40, 42, 67, 88, 118, and 137 each coordinate S-adenosyl-L-methionine.

It belongs to the class I-like SAM-binding methyltransferase superfamily. rRNA adenine N(6)-methyltransferase family. RsmA subfamily.

It localises to the cytoplasm. It catalyses the reaction adenosine(1518)/adenosine(1519) in 16S rRNA + 4 S-adenosyl-L-methionine = N(6)-dimethyladenosine(1518)/N(6)-dimethyladenosine(1519) in 16S rRNA + 4 S-adenosyl-L-homocysteine + 4 H(+). Its function is as follows. Specifically dimethylates two adjacent adenosines (A1518 and A1519) in the loop of a conserved hairpin near the 3'-end of 16S rRNA in the 30S particle. May play a critical role in biogenesis of 30S subunits. This is Ribosomal RNA small subunit methyltransferase A from Rhodococcus opacus (strain B4).